Consider the following 1201-residue polypeptide: uncharacterized protein (1201 aa).

Residues 140-160 traverse the membrane as a helical segment; it reads IIINLIFFFAFIIVGIYLFKP. Coiled coils occupy residues 420–459 and 536–574; these read QKKQLIIEEQIKLINAKIQQLERKLANIEVESLKSIAELN and AIKAIEKNEIQKFKKELLELEREKQEIRAQSLQVLITKM.

It localises to the cell membrane. This is an uncharacterized protein from Bacillus subtilis (strain 168).